A 256-amino-acid polypeptide reads, in one-letter code: ATP synthase peripheral stalk subunit b, mitochondrial (256 aa).

Residues 1–42 constitute a mitochondrion transit peptide; the sequence is MLSRVVLSAAATAAPCLKNAAALGPGVLQATRAFHTGQPRLA. Position 131 is an N6-succinyllysine (Lys131). Lys139, Lys154, Lys162, Lys221, Lys225, Lys233, and Lys244 each carry N6-acetyllysine.

It belongs to the eukaryotic ATPase B chain family. Component of the ATP synthase complex composed at least of ATP5F1A/subunit alpha, ATP5F1B/subunit beta, ATP5MC1/subunit c (homooctomer), MT-ATP6/subunit a, MT-ATP8/subunit 8, ATP5ME/subunit e, ATP5MF/subunit f, ATP5MG/subunit g, ATP5MK/subunit k, ATP5MJ/subunit j, ATP5F1C/subunit gamma, ATP5F1D/subunit delta, ATP5F1E/subunit epsilon, ATP5PF/subunit F6, ATP5PB/subunit b, ATP5PD/subunit d, ATP5PO/subunit OSCP. ATP synthase complex consists of a soluble F(1) head domain (subunits alpha(3) and beta(3)) - the catalytic core - and a membrane F(0) domain - the membrane proton channel (subunits c, a, 8, e, f, g, k and j). These two domains are linked by a central stalk (subunits gamma, delta, and epsilon) rotating inside the F1 region and a stationary peripheral stalk (subunits F6, b, d, and OSCP).

Its subcellular location is the mitochondrion. The protein resides in the mitochondrion inner membrane. Functionally, subunit b, of the mitochondrial membrane ATP synthase complex (F(1)F(0) ATP synthase or Complex V) that produces ATP from ADP in the presence of a proton gradient across the membrane which is generated by electron transport complexes of the respiratory chain. ATP synthase complex consist of a soluble F(1) head domain - the catalytic core - and a membrane F(1) domain - the membrane proton channel. These two domains are linked by a central stalk rotating inside the F(1) region and a stationary peripheral stalk. During catalysis, ATP synthesis in the catalytic domain of F(1) is coupled via a rotary mechanism of the central stalk subunits to proton translocation. In vivo, can only synthesize ATP although its ATP hydrolase activity can be activated artificially in vitro. Part of the complex F(0) domain. Part of the complex F(0) domain and the peripheric stalk, which acts as a stator to hold the catalytic alpha(3)beta(3) subcomplex and subunit a/ATP6 static relative to the rotary elements. This Mus musculus (Mouse) protein is ATP synthase peripheral stalk subunit b, mitochondrial.